We begin with the raw amino-acid sequence, 390 residues long: Acetylornithine aminotransferase (390 aa).

Residues 105–106 (GA) and Phe132 each bind pyridoxal 5'-phosphate. Arg135 lines the N(2)-acetyl-L-ornithine pocket. 217-220 (DEVQ) is a binding site for pyridoxal 5'-phosphate. Residue Lys246 is modified to N6-(pyridoxal phosphate)lysine. Ser274 serves as a coordination point for N(2)-acetyl-L-ornithine. Thr275 contributes to the pyridoxal 5'-phosphate binding site.

It belongs to the class-III pyridoxal-phosphate-dependent aminotransferase family. ArgD subfamily. In terms of assembly, homodimer. Pyridoxal 5'-phosphate serves as cofactor.

The protein resides in the cytoplasm. It carries out the reaction N(2)-acetyl-L-ornithine + 2-oxoglutarate = N-acetyl-L-glutamate 5-semialdehyde + L-glutamate. It functions in the pathway amino-acid biosynthesis; L-arginine biosynthesis; N(2)-acetyl-L-ornithine from L-glutamate: step 4/4. The chain is Acetylornithine aminotransferase from Methanothermobacter thermautotrophicus (strain ATCC 29096 / DSM 1053 / JCM 10044 / NBRC 100330 / Delta H) (Methanobacterium thermoautotrophicum).